Consider the following 468-residue polypeptide: Phenylalanine--tRNA ligase alpha subunit (468 aa).

L-phenylalanine contacts are provided by residues Thr-311, 350–352, and Phe-390; that span reads QLD. Glu-392 provides a ligand contact to Mg(2+).

It belongs to the class-II aminoacyl-tRNA synthetase family. Phe-tRNA synthetase alpha subunit type 2 subfamily. As to quaternary structure, tetramer of two alpha and two beta subunits. Requires Mg(2+) as cofactor.

It localises to the cytoplasm. The catalysed reaction is tRNA(Phe) + L-phenylalanine + ATP = L-phenylalanyl-tRNA(Phe) + AMP + diphosphate + H(+). In Saccharolobus solfataricus (strain ATCC 35092 / DSM 1617 / JCM 11322 / P2) (Sulfolobus solfataricus), this protein is Phenylalanine--tRNA ligase alpha subunit.